Here is a 105-residue protein sequence, read N- to C-terminus: MSLGPWEIGIIVLLIIVLFGAKKLPDAARSIGRSMRIFKSEVKEMNKDGDTPEQQQQPQQQIAPNQIEAPQPNFEQHYQGQQVQQPQNPQTPDYRQNYEDPNRTS.

Residues 1-21 (MSLGPWEIGIIVLLIIVLFGA) form a helical membrane-spanning segment. The segment covering 41 to 50 (EVKEMNKDGD) has biased composition (basic and acidic residues). The disordered stretch occupies residues 41 to 105 (EVKEMNKDGD…QNYEDPNRTS (65 aa)). Residues 52-92 (PEQQQQPQQQIAPNQIEAPQPNFEQHYQGQQVQQPQNPQTP) are compositionally biased toward low complexity. Basic and acidic residues predominate over residues 96–105 (QNYEDPNRTS).

This sequence belongs to the TatA/E family. The Tat system comprises two distinct complexes: a TatABC complex, containing multiple copies of TatA, TatB and TatC subunits, and a separate TatA complex, containing only TatA subunits. Substrates initially bind to the TatABC complex, which probably triggers association of the separate TatA complex to form the active translocon.

The protein resides in the cell membrane. Its function is as follows. Part of the twin-arginine translocation (Tat) system that transports large folded proteins containing a characteristic twin-arginine motif in their signal peptide across membranes. TatA could form the protein-conducting channel of the Tat system. This chain is Sec-independent protein translocase protein TatA, found in Corynebacterium glutamicum (strain ATCC 13032 / DSM 20300 / JCM 1318 / BCRC 11384 / CCUG 27702 / LMG 3730 / NBRC 12168 / NCIMB 10025 / NRRL B-2784 / 534).